The primary structure comprises 1063 residues: Probable hemoglobin and hemoglobin-haptoglobin-binding protein 1 (1063 aa).

The first 24 residues, 1–24 (MTNFKFSLLACSIAFALNASIAYA), serve as a signal peptide directing secretion. Repeat copies occupy residues 26–29 (QPTN), 30–33 (QPTN), 34–37 (QPTN), 38–41 (QPTN), 42–45 (QPTN), 46–49 (QPTN), and 50–53 (QPTN). The tract at residues 26–53 (QPTNQPTNQPTNQPTNQPTNQPTNQPTN) is 7 X 4 AA tandem repeats of Q-P-T-N. A compositionally biased stretch (low complexity) spans 28–55 (TNQPTNQPTNQPTNQPTNQPTNQPTNQN). Positions 28–57 (TNQPTNQPTNQPTNQPTNQPTNQPTNQNSN) are disordered. The short motif at 63-70 (EQINVSGS) is the TonB box element. Residues 66–200 (NVSGSSENIN…LGGSVIFETK (135 aa)) form the TBDR plug domain. In terms of domain architecture, TBDR beta-barrel spans 208–1063 (DKDYYLSYKR…NYRMSVQFEF (856 aa)). Residues 1046–1063 (NRFYAPGRNYRMSVQFEF) carry the TonB C-terminal box motif.

Belongs to the TonB-dependent receptor family. Hemoglobin/haptoglobin binding protein subfamily.

It localises to the cell outer membrane. Functionally, acts as a receptor for hemoglobin or the hemoglobin/haptoglobin complex of the human host and is required for heme uptake. This Haemophilus influenzae (strain ATCC 51907 / DSM 11121 / KW20 / Rd) protein is Probable hemoglobin and hemoglobin-haptoglobin-binding protein 1.